Here is a 9159-residue protein sequence, read N- to C-terminus: Halomucin (9159 aa).

A signal peptide spans 1 to 30 (MSQTAKPIFAVVVALIVLISGVAFIGSVSA). C-type lectin domains follow at residues 644–776 (TTGN…YLVE) and 929–1060 (YDGH…VEYG). The segment covering 1310-1332 (QPQTVNDPDAVSTRNNNVGSNGL) has biased composition (polar residues). A disordered region spans residues 1310–1351 (QPQTVNDPDAVSTRNNNVGSNGLDSKIEDDQNNGADGNPHGT). The interval 1756 to 3380 (VGGLIGESSG…GFNGEHVGGL (1625 aa)) is V-G-G-L motif-rich region. Disordered regions lie at residues 3484-3514 (GATAQSDATGSGTPGGATGYGSVGDTTPAPQ), 4878-4912 (ESYWDKGATDKSDATGSDTPATVSGYGSVGDTTPA), 6570-6589 (TDSATGSSVGGLIGSQSSGQ), 7047-7097 (TPTV…GINT), 7660-7702 (ATDS…NPGG), 7888-7923 (IDGDGLADDNEATGVPTDNDDDNDGIPDDEDQEPAL), 8212-8237 (STQQKRVGPLVSEDPSTVSWPSGAAD), and 8369-8614 (DSTA…GSST). The segment covering 3495–3505 (GTPGGATGYGS) has biased composition (gly residues). The span at 4880–4890 (YWDKGATDKSD) shows a compositional bias: basic and acidic residues. 2 stretches are compositionally biased toward polar residues: residues 7048–7057 (PTVTINSSSD) and 7068–7078 (GEDSTSSNESS). A compositionally biased stretch (acidic residues) spans 7079-7092 (DGTESDQGDPEDDI). A compositionally biased stretch (polar residues) spans 7681–7698 (VTGSTPTFVSSGTVTTPE). In terms of domain architecture, Cadherin spans 7686–7793 (PTFVSSGTVT…ITDVDEQPTG (108 aa)). 2 stretches are compositionally biased toward acidic residues: residues 7888 to 7898 (IDGDGLADDNE) and 7905 to 7920 (DNDDDNDGIPDDEDQE). A compositionally biased stretch (acidic residues) spans 8378-8390 (ALEDDSSNQDSGD). 2 stretches are compositionally biased toward low complexity: residues 8391-8529 (DSSN…SSQN) and 8538-8548 (SAAAVGAESGS). Gly residues-rich tracts occupy residues 8549–8566 (EMGGETGGESQAGGGDGS) and 8574–8608 (AGGGSSGGSSSGDSGGSSSGNSGGSSSGNSGGSSS).

Probably glycosylated with sugar containing sialic acid. This may further contribute to its overall negative charge, thereby creating an aqueous shield covering the cells.

It localises to the secreted. May protect the organism from desiccation stress. May also contribute to the rigidity and maintenance of the unique square cell morphology of H.walsbyi. The chain is Halomucin (hmu) from Haloquadratum walsbyi (strain DSM 16790 / HBSQ001).